The sequence spans 340 residues: Alpha-1,3-galactosyltransferase 2 (340 aa).

The Cytoplasmic segment spans residues 1–12 (MALKEGLRAWKR). The helical; Signal-anchor for type II membrane protein transmembrane segment at 13 to 32 (IFWRQILLTLGLLGLFLYGL) threads the bilayer. At 33–340 (PKFRHLEALI…APKGYRLLRN (308 aa)) the chain is on the lumenal side. N-linked (GlcNAc...) asparagine glycosylation is found at asparagine 58 and asparagine 100. Mn(2+) is bound by residues aspartate 199 and aspartate 201.

Belongs to the glycosyltransferase 6 family. Mn(2+) serves as cofactor. As to expression, expressed in thymus and monocyte derived dendritic cells.

The protein localises to the golgi apparatus. The protein resides in the golgi stack membrane. The enzyme catalyses a beta-D-galactosyl-(1-&gt;4)-N-acetyl-beta-D-glucosaminyl derivative + UDP-alpha-D-galactose = an alpha-D-galactosyl-(1-&gt;3)-beta-D-galactosyl-(1-&gt;4)-N-acetyl-beta-D-glucosaminyl derivative + UDP + H(+). It catalyses the reaction a beta-D-Gal-(1-&gt;4)-beta-D-Glc-(1&lt;-&gt;1)-Cer(d18:1(4E)) + UDP-alpha-D-galactose = an isogloboside iGb3Cer (d18:1(4E)) + UDP + H(+). The catalysed reaction is a globoside Gb3Cer + UDP-alpha-D-galactose = a globoside GalGb3Cer + UDP + H(+). Synthesizes the galactose-alpha(1,3)-galactose group on the glycosphingolipid isoglobotrihexosylceramide or isogloboside 3 (iGb3) by catalyzing the transfer of galactose from UDP-Galactose to its acceptor molecule Gal-beta-1,4-Glc-ceramide. Can also catalyze the addition of galactose to iGb3 itself to form polygalactose structures. The protein is Alpha-1,3-galactosyltransferase 2 of Homo sapiens (Human).